The sequence spans 93 residues: DNA-binding protein Fis (93 aa).

Positions Q74–K93 form a DNA-binding region, H-T-H motif.

It belongs to the transcriptional regulatory Fis family. Homodimer.

Its function is as follows. Activates ribosomal RNA transcription. Plays a direct role in upstream activation of rRNA promoters. The sequence is that of DNA-binding protein Fis from Proteus vulgaris.